Reading from the N-terminus, the 663-residue chain is Protein pat-12 (663 aa).

Positions Met1–Ser15 are enriched in polar residues. Disordered regions lie at residues Met1 to Tyr78, Arg367 to Thr430, Phe517 to Arg546, and Pro597 to Arg663. The span at Arg367 to Arg380 shows a compositional bias: basic and acidic residues. A compositionally biased stretch (basic residues) spans Val381–His400. Positions Phe517 to Ser526 are enriched in polar residues. 2 stretches are compositionally biased toward basic and acidic residues: residues Phe620–Asp640 and Asn649–Arg663.

As to quaternary structure, interacts with vab-10 (via plankin domain). In terms of tissue distribution, isoform a: Expressed in the uterus, the vulva, the rectum, mechanosensory neurons and in head and tail neurons. Isoform e: Expressed in spermatheca and weakly in the vulva. Isoform f: Expressed in spermatheca and weakly in the vulva. Isoform i: Expressed in spermatheca and weakly in the vulva.

The protein localises to the apical cell membrane. It localises to the basal cell membrane. Its subcellular location is the cytoplasm. The protein resides in the cell junction. It is found in the hemidesmosome. The protein localises to the cell membrane. It localises to the cytoskeleton. Its function is as follows. Required for embryonic morphology and development. Plays both a functional and a structural role in the maintenance and probably biogenesis of fibrous organelles, a hemidesomosome-like junction structure, which ensures muscle stability and muscle connection to the external cuticle. This Caenorhabditis elegans protein is Protein pat-12.